Reading from the N-terminus, the 210-residue chain is MIDKESLKKCLKLYLVTDSEMLKGRDFYKCLEDAISSGITTVQLREKNASGREFLRKAMKLREITKRYGVKFIINDRVDIALICDADGVHVGQSDIDVREVRKLIGNNKILGVSARTLEEAICAKNDGADYLGVGSIFTTSTKLDAKSASFETVKEIKEKVDMPFVLIGGINLDNIDKLKCLESDGYAIISAILKAEDISKEVEKWTLKI.

4-amino-2-methyl-5-(diphosphooxymethyl)pyrimidine contacts are provided by residues 43-47 (QLREK) and Asn75. Mg(2+) is bound by residues Asp76 and Asp95. Ser114 contacts 4-amino-2-methyl-5-(diphosphooxymethyl)pyrimidine. Residue 140-142 (TST) coordinates 2-[(2R,5Z)-2-carboxy-4-methylthiazol-5(2H)-ylidene]ethyl phosphate. A 4-amino-2-methyl-5-(diphosphooxymethyl)pyrimidine-binding site is contributed by Lys143. Residues Gly170 and 190-191 (IS) contribute to the 2-[(2R,5Z)-2-carboxy-4-methylthiazol-5(2H)-ylidene]ethyl phosphate site.

Belongs to the thiamine-phosphate synthase family. Mg(2+) serves as cofactor.

It carries out the reaction 2-[(2R,5Z)-2-carboxy-4-methylthiazol-5(2H)-ylidene]ethyl phosphate + 4-amino-2-methyl-5-(diphosphooxymethyl)pyrimidine + 2 H(+) = thiamine phosphate + CO2 + diphosphate. The catalysed reaction is 2-(2-carboxy-4-methylthiazol-5-yl)ethyl phosphate + 4-amino-2-methyl-5-(diphosphooxymethyl)pyrimidine + 2 H(+) = thiamine phosphate + CO2 + diphosphate. The enzyme catalyses 4-methyl-5-(2-phosphooxyethyl)-thiazole + 4-amino-2-methyl-5-(diphosphooxymethyl)pyrimidine + H(+) = thiamine phosphate + diphosphate. Its pathway is cofactor biosynthesis; thiamine diphosphate biosynthesis; thiamine phosphate from 4-amino-2-methyl-5-diphosphomethylpyrimidine and 4-methyl-5-(2-phosphoethyl)-thiazole: step 1/1. Functionally, condenses 4-methyl-5-(beta-hydroxyethyl)thiazole monophosphate (THZ-P) and 2-methyl-4-amino-5-hydroxymethyl pyrimidine pyrophosphate (HMP-PP) to form thiamine monophosphate (TMP). This chain is Thiamine-phosphate synthase, found in Clostridioides difficile (strain 630) (Peptoclostridium difficile).